The following is a 362-amino-acid chain: tRNA-specific 2-thiouridylase MnmA 1 (362 aa).

Residues 29 to 36 and Met-55 each bind ATP; that span reads AMSGGVDS. Cys-109 functions as the Nucleophile in the catalytic mechanism. Residues Cys-109 and Cys-201 are joined by a disulfide bond. Gly-133 is a binding site for ATP. The interaction with tRNA stretch occupies residues 151 to 153; the sequence is KDQ. Cys-201 serves as the catalytic Cysteine persulfide intermediate.

The protein belongs to the MnmA/TRMU family.

It localises to the cytoplasm. It carries out the reaction S-sulfanyl-L-cysteinyl-[protein] + uridine(34) in tRNA + AH2 + ATP = 2-thiouridine(34) in tRNA + L-cysteinyl-[protein] + A + AMP + diphosphate + H(+). In terms of biological role, catalyzes the 2-thiolation of uridine at the wobble position (U34) of tRNA, leading to the formation of s(2)U34. This is tRNA-specific 2-thiouridylase MnmA 1 from Fusobacterium nucleatum subsp. nucleatum (strain ATCC 25586 / DSM 15643 / BCRC 10681 / CIP 101130 / JCM 8532 / KCTC 2640 / LMG 13131 / VPI 4355).